Reading from the N-terminus, the 235-residue chain is Ubiquinone/menaquinone biosynthesis C-methyltransferase UbiE (235 aa).

Thr-60, Asp-81, and Ser-126 together coordinate S-adenosyl-L-methionine.

This sequence belongs to the class I-like SAM-binding methyltransferase superfamily. MenG/UbiE family.

The catalysed reaction is a 2-demethylmenaquinol + S-adenosyl-L-methionine = a menaquinol + S-adenosyl-L-homocysteine + H(+). It carries out the reaction a 2-methoxy-6-(all-trans-polyprenyl)benzene-1,4-diol + S-adenosyl-L-methionine = a 5-methoxy-2-methyl-3-(all-trans-polyprenyl)benzene-1,4-diol + S-adenosyl-L-homocysteine + H(+). It participates in quinol/quinone metabolism; menaquinone biosynthesis; menaquinol from 1,4-dihydroxy-2-naphthoate: step 2/2. It functions in the pathway cofactor biosynthesis; ubiquinone biosynthesis. Methyltransferase required for the conversion of demethylmenaquinol (DMKH2) to menaquinol (MKH2) and the conversion of 2-polyprenyl-6-methoxy-1,4-benzoquinol (DDMQH2) to 2-polyprenyl-3-methyl-6-methoxy-1,4-benzoquinol (DMQH2). This Geobacter sp. (strain M21) protein is Ubiquinone/menaquinone biosynthesis C-methyltransferase UbiE.